The primary structure comprises 213 residues: Nucleolar protein 12 (213 aa).

The stretch at 33 to 96 forms a coiled coil; it reads GFHKRKVERK…RLVTAKTESV (64 aa). Positions 109-213 are disordered; that stretch reads TISDLDLSGA…LTGKAQHSRE (105 aa). The span at 130–139 shows a compositional bias: acidic residues; it reads AGDESEEEAS. Basic residues predominate over residues 170–182; sequence AHSRKKVKRKHPR.

The protein belongs to the RRP17 family. In terms of assembly, interacts with KIAA1191.

The protein resides in the nucleus. It is found in the nucleolus. It localises to the cytoplasm. Its function is as follows. Multifunctional RNA binding protein that plays a role in RNA metabolism and DNA maintenance. Participates in the resolution of DNA stress and the maintenance of genome integrity by localizing to sites of DNA insults. Also plays a role in proper nucleolar organization by limiting nucleolar size and regulating nucleolar number. Mechanistically, regulates the nucleolar levels of fibrillarin and nucleolin, two key players in pre-rRNA processing and ribosome assembly. The sequence is that of Nucleolar protein 12 (NOL12) from Pongo abelii (Sumatran orangutan).